Reading from the N-terminus, the 338-residue chain is UDP-glucose 4-epimerase (338 aa).

NAD(+) contacts are provided by residues 11 to 12, 31 to 36, 58 to 59, 80 to 84, asparagine 99, serine 124, tyrosine 149, lysine 153, and phenylalanine 178; these read FI, DNLCNS, DI, and FAGLK. The substrate site is built by serine 124 and tyrosine 149. Catalysis depends on tyrosine 149, which acts as the Proton acceptor. Substrate is bound by residues asparagine 179, 199-200, 216-218, arginine 231, and 292-295; these read NL, SVF, and RAGD.

This sequence belongs to the NAD(P)-dependent epimerase/dehydratase family. As to quaternary structure, homodimer. NAD(+) is required as a cofactor.

It carries out the reaction UDP-alpha-D-glucose = UDP-alpha-D-galactose. The protein operates within carbohydrate metabolism; galactose metabolism. Involved in the metabolism of galactose. Plays an essential role in the incorporation of galactose into meningococcal lipopolysaccharide surface molecules, which are important for pathogenesis. Catalyzes the conversion of UDP-galactose (UDP-Gal) to UDP-glucose (UDP-Glc) through a mechanism involving the transient reduction of NAD. The chain is UDP-glucose 4-epimerase (galE) from Neisseria gonorrhoeae.